Here is a 56-residue protein sequence, read N- to C-terminus: Large ribosomal subunit protein bL32 (56 aa).

Basic residues predominate over residues 1–16 (MAVQKSKKSRSMRGMR). Residues 1–33 (MAVQKSKKSRSMRGMRRSHDALTTSAVSVDATS) are disordered. Positions 21–33 (ALTTSAVSVDATS) are enriched in polar residues.

Belongs to the bacterial ribosomal protein bL32 family.

The chain is Large ribosomal subunit protein bL32 from Aliivibrio fischeri (strain ATCC 700601 / ES114) (Vibrio fischeri).